The sequence spans 424 residues: MCTTISFAEPEIVLGHGRRVLFVNPDDLQIFKEIELPPDLGLKGHTSQSQESCTAAAAASTATAASGQAPGGKEQQLANQPEEGGTSASASGLGCATSTSVQNVAYSPDGQLLAVTTSGKQKALLLYRSRPENARLLSARPLARASSALRFCSDSSSILVTDKTGDCYQYDCVEVEAPPRLLLGHLSVVYDILWSEDQQHIITCDRDDKIRVTNYPATFDIHSYCLGHREFVSGLALLTEQHIASASGDKTLRVWNYIQGKELLQHELPAPAVRLLVRQLEPEKVFQAAVLFYEHVDALGLYRLERSSDDTWSVTATQLVCAEAGSWSISNFTLTSDRIYITGAENERLSLRVYDIATGQPASSGVPEGWLKMVLDGLGANEEGAPPFIPEDLSVWFKKRFDNVSDYLERKKRRIEEQQQQKCG.

Residues 42–92 (LKGHTSQSQESCTAAAAASTATAASGQAPGGKEQQLANQPEEGGTSASASG) are disordered. Low complexity predominate over residues 46–68 (TSQSQESCTAAAAASTATAASGQ). WD repeat units follow at residues 96–137 (ATST…ARLL), 184–223 (GHLS…DIHS), 227–265 (GHRE…ELLQ), and 324–364 (AGSW…PASS).

The protein belongs to the WD repeat TRM82 family. Forms a heterodimer with the catalytic subunit Mettl1. Interacts with mei-P26 and weakly interacts with bgcn; required for the function or formation of the mei-P26-bgcn-bam-sxl complex. Interacts with nanos; may be involved in mei-P26-dependent derepression of the BMP signaling pathway. Interacts with Myc; the interaction may be mediated by mei-P26 and may be involved in the regulation of ribosome biogenesis. In testis, it is present at high level in hub cells, a niche for germline stem cells of testis. Ubiquitously expressed in all testicular cells throughout spermatogenesis. Ubiquitously expressed in all germline and somatic cells of the ovary.

Its subcellular location is the nucleus. The protein resides in the cytoplasm. Its pathway is tRNA modification; N(7)-methylguanine-tRNA biosynthesis. Functionally, required for the Mettl1-dependent formation of N(7)-methylguanine at position 46 (m7G46) in tRNA. In the Mettl1-wuho methyltransferase complex, it is required to stabilize and induce conformational changes of the catalytic subunit. Required for binding of nanos mRNA and repression of translation by the mei-P26-bgcn-bam-sxl complex. May cooperate with mei-P26 and nanos to derepress the BMP signaling pathway. May cooperate with mei-P26 to suppress expression of a subset of microRNAs. May cooperate with mei-P26 to regulate bam expression levels in germline cells during gametogenesis. Required to promote mitosis to meiosis transition during gametogenesis. May regulate germline cell division in part by regulating ribosome biogenesis. The protein is tRNA (guanine-N(7)-)-methyltransferase non-catalytic subunit wuho of Drosophila melanogaster (Fruit fly).